A 160-amino-acid chain; its full sequence is Adenosine 5'-monophosphoramidase HINT3 (160 aa).

The 109-residue stretch at 24-132 (IFCTIAKGDD…LAPYSQLYKW (109 aa)) folds into the HIT domain. AMP-binding positions include 50–51 (DI) and 119–121 (HLH). The Histidine triad motif signature appears at 117-121 (HLHLH). The active-site Tele-AMP-histidine intermediate is the His119.

This sequence belongs to the HINT family. Forms dimers to octamers and even larger oligomer.

The protein localises to the cytoplasm. The protein resides in the nucleus. It catalyses the reaction adenosine 5'-phosphoramidate + H2O = AMP + NH4(+). Its function is as follows. Exhibits adenosine 5'-monophosphoramidase activity, hydrolyzing purine nucleotide phosphoramidates with a single phosphate group such as adenosine 5'monophosphoramidate (AMP-NH2) to yield AMP and NH2. Hydrolyzes lysyl-AMP (AMP-N-epsilon-(N-alpha-acetyl lysine methyl ester)) generated by lysine tRNA ligase. This chain is Adenosine 5'-monophosphoramidase HINT3 (hint3), found in Danio rerio (Zebrafish).